Consider the following 191-residue polypeptide: Calcium-binding protein L (191 aa).

Gly-2 carries N-myristoyl glycine lipidation. EF-hand domains are found at residues 25-59 (EQVS…RFKD), 60-95 (YDDA…ITKS), and 96-131 (PVSD…ALNT). The Ca(2+) site is built by Asp-73, Asp-75, Asn-77, Arg-79, and Glu-84.

This sequence belongs to the recoverin family.

The chain is Calcium-binding protein L (cbpL) from Dictyostelium discoideum (Social amoeba).